Reading from the N-terminus, the 346-residue chain is MESTLSAGIMMAEALQNQLPGLENMWLWVTFLADPKNLFQFYFPAVYYASRRLGISLFWIAFITEWLNLVFKWFLFGDRPFWWVHESGYSAQTPVQIHQFPSSCETGPGSPSGHCMITGAALWPVMIAISSQVASQTRSPWVRVIPGLAYCTFLLAVGLSRVFLLAHFPHQVLAGLLAGVILGWLLSPRVPMERELSFYGLTALTLMLGASLMYWTLFTLGLDLSWSINLASKWCDRPEWVLVDSRPFASLSRDSGSALGLGIALHTPCYAQIRRVHLGNGQKIACFVLAMGLLVFLEWLGHPPQISLFYIFNFLKFTLWPCLVVALVPWMVHTLSAQEAPPIRSS.

Over 1–25 (MESTLSAGIMMAEALQNQLPGLENM) the chain is Lumenal. The chain crosses the membrane as a helical span at residues 26–46 (WLWVTFLADPKNLFQFYFPAV). Topologically, residues 47–56 (YYASRRLGIS) are cytoplasmic. Residues 57–77 (LFWIAFITEWLNLVFKWFLFG) traverse the membrane as a helical segment. Topologically, residues 78–115 (DRPFWWVHESGYSAQTPVQIHQFPSSCETGPGSPSGHC) are lumenal. R79 lines the substrate pocket. Residue H114 is the Proton donor of the active site. A helical transmembrane segment spans residues 116–135 (MITGAALWPVMIAISSQVAS). Over 136–140 (QTRSP) the chain is Cytoplasmic. A helical membrane pass occupies residues 141-162 (WVRVIPGLAYCTFLLAVGLSRV). Residue R161 participates in substrate binding. Residues 163 to 167 (FLLAH) are Lumenal-facing. The Nucleophile role is filled by H167. Residues 168-186 (FPHQVLAGLLAGVILGWLL) traverse the membrane as a helical segment. The Cytoplasmic portion of the chain corresponds to 187-197 (SPRVPMERELS). The helical transmembrane segment at 198–218 (FYGLTALTLMLGASLMYWTLF) threads the bilayer. Over 219–254 (TLGLDLSWSINLASKWCDRPEWVLVDSRPFASLSRD) the chain is Lumenal. The helical transmembrane segment at 255–273 (SGSALGLGIALHTPCYAQI) threads the bilayer. Residues 274-283 (RRVHLGNGQK) lie on the Cytoplasmic side of the membrane. A helical transmembrane segment spans residues 284 to 304 (IACFVLAMGLLVFLEWLGHPP). Over 305–307 (QIS) the chain is Lumenal. Residues 308–328 (LFYIFNFLKFTLWPCLVVALV) form a helical membrane-spanning segment. Over 329 to 346 (PWMVHTLSAQEAPPIRSS) the chain is Cytoplasmic.

Belongs to the glucose-6-phosphatase family. As to expression, expressed in liver and kidney. It is the major glucose-6-phosphatase expressed in the small intestine.

The protein localises to the endoplasmic reticulum membrane. The enzyme catalyses D-glucose 6-phosphate + H2O = D-glucose + phosphate. The protein operates within carbohydrate biosynthesis; gluconeogenesis. Its activity is regulated as follows. Inhibited by vanadate. Functionally, hydrolyzes glucose-6-phosphate to glucose in the endoplasmic reticulum. May form with the glucose-6-phosphate transporter (SLC37A4/G6PT) a ubiquitously expressed complex responsible for glucose production through glycogenolysis and gluconeogenesis. Probably required for normal neutrophil function. The sequence is that of Glucose-6-phosphatase 3 (G6pc3) from Rattus norvegicus (Rat).